We begin with the raw amino-acid sequence, 267 residues long: uncharacterized protein (267 aa).

The protein belongs to the glycosyltransferase 2 family.

This is an uncharacterized protein from Haemophilus influenzae (strain ATCC 51907 / DSM 11121 / KW20 / Rd).